A 760-amino-acid polypeptide reads, in one-letter code: Protein P1 (760 aa).

An N-terminal signal peptide occupies residues 1-33; sequence MASFLKPVNSQGLWLSLLLAITYLFLLPSAGQS. 4 helical membrane passes run 172–192, 194–214, 218–235, and 240–260; these read LIEFVLVSWSLWLCSVLVYVA, AVPGKFLLYMAAFCTTFWAWP, ASSLIRIVTTPLTLIGFL, and IGLISHCLALTWNMFMTWSLL. One can recognise a Peptidase S39 domain in the interval 318–515; that stretch reads IPGVQIKKLR…SSSPKFTGCE (198 aa). Catalysis depends on for protease activity residues His-366, Asp-396, and Ser-465. Disordered regions lie at residues 572 to 672 and 684 to 760; these read GLWA…LSQV and LTVQ…PRRN. Over residues 621–643 the composition is skewed to basic and acidic residues; sequence RAEKVRHVRRSEMTPEQKRADNL.

This sequence belongs to the peptidase S39B family. In terms of processing, specific enzymatic cleavages in vivo yield mature proteins. The protease probably cleaves itself and releases the VPg protein.

The protein resides in the membrane. In terms of biological role, precursor from which the VPg molecule is probably released at the onset of the RNA synthesis. Essential for virus replication. The sequence is that of Protein P1 from Pea enation mosaic virus-1 (strain WSG) (PEMV-1).